The sequence spans 78 residues: Large ribosomal subunit protein eL20 (78 aa).

It belongs to the eukaryotic ribosomal protein eL20 family. Part of the 50S ribosomal subunit. Binds 23S rRNA.

This Nanoarchaeum equitans (strain Kin4-M) protein is Large ribosomal subunit protein eL20.